Consider the following 461-residue polypeptide: Phosphoglucosamine mutase (461 aa).

Serine 113 functions as the Phosphoserine intermediate in the catalytic mechanism. The Mg(2+) site is built by serine 113, aspartate 251, aspartate 253, and aspartate 255. Serine 113 is subject to Phosphoserine.

The protein belongs to the phosphohexose mutase family. The cofactor is Mg(2+). In terms of processing, activated by phosphorylation.

It carries out the reaction alpha-D-glucosamine 1-phosphate = D-glucosamine 6-phosphate. Catalyzes the conversion of glucosamine-6-phosphate to glucosamine-1-phosphate. This is Phosphoglucosamine mutase from Prochlorococcus marinus (strain SARG / CCMP1375 / SS120).